Reading from the N-terminus, the 364-residue chain is tRNA(Met) cytidine acetate ligase (364 aa).

Residues 7–20 (IAEF…HKYL), G96, N152, and R175 each bind ATP.

The protein belongs to the TmcAL family.

It is found in the cytoplasm. The catalysed reaction is cytidine(34) in elongator tRNA(Met) + acetate + ATP = N(4)-acetylcytidine(34) in elongator tRNA(Met) + AMP + diphosphate. Its function is as follows. Catalyzes the formation of N(4)-acetylcytidine (ac(4)C) at the wobble position of elongator tRNA(Met), using acetate and ATP as substrates. First activates an acetate ion to form acetyladenylate (Ac-AMP) and then transfers the acetyl group to tRNA to form ac(4)C34. This Streptococcus sanguinis (strain SK36) protein is tRNA(Met) cytidine acetate ligase.